We begin with the raw amino-acid sequence, 181 residues long: Peptide deformylase 2 (181 aa).

Residues Cys109 and His151 each coordinate Fe cation. Glu152 is an active-site residue. His155 contacts Fe cation.

The protein belongs to the polypeptide deformylase family. It depends on Fe(2+) as a cofactor.

It catalyses the reaction N-terminal N-formyl-L-methionyl-[peptide] + H2O = N-terminal L-methionyl-[peptide] + formate. In terms of biological role, removes the formyl group from the N-terminal Met of newly synthesized proteins. Requires at least a dipeptide for an efficient rate of reaction. N-terminal L-methionine is a prerequisite for activity but the enzyme has broad specificity at other positions. The sequence is that of Peptide deformylase 2 from Shewanella oneidensis (strain ATCC 700550 / JCM 31522 / CIP 106686 / LMG 19005 / NCIMB 14063 / MR-1).